The sequence spans 95 residues: MQALIEISDKQYLVKAGDKIFVPKQKAAAGDVIEVKTLMQVNQADSALKAGTATIKVLEHVRDETIIVFRKKRRKRFQKRNGHRQHMTQVEVLSL.

It belongs to the bacterial ribosomal protein bL21 family. As to quaternary structure, part of the 50S ribosomal subunit. Contacts protein L20.

This protein binds to 23S rRNA in the presence of protein L20. This Chlorobaculum tepidum (strain ATCC 49652 / DSM 12025 / NBRC 103806 / TLS) (Chlorobium tepidum) protein is Large ribosomal subunit protein bL21.